A 387-amino-acid chain; its full sequence is 3-ketoacyl-CoA thiolase (387 aa).

The Acyl-thioester intermediate role is filled by Cys-91. Residues His-343 and Cys-373 each act as proton acceptor in the active site.

The protein belongs to the thiolase-like superfamily. Thiolase family. As to quaternary structure, heterotetramer of two alpha chains (FadB) and two beta chains (FadA).

Its subcellular location is the cytoplasm. The catalysed reaction is an acyl-CoA + acetyl-CoA = a 3-oxoacyl-CoA + CoA. The protein operates within lipid metabolism; fatty acid beta-oxidation. In terms of biological role, catalyzes the final step of fatty acid oxidation in which acetyl-CoA is released and the CoA ester of a fatty acid two carbons shorter is formed. This chain is 3-ketoacyl-CoA thiolase, found in Escherichia coli O139:H28 (strain E24377A / ETEC).